The sequence spans 335 residues: Glycerol-3-phosphate dehydrogenase [NAD(P)+] (335 aa).

Residues S15, Y16, H36, and K110 each coordinate NADPH. 3 residues coordinate sn-glycerol 3-phosphate: K110, G139, and T141. A143 contributes to the NADPH binding site. 5 residues coordinate sn-glycerol 3-phosphate: K195, D248, S258, R259, and N260. The active-site Proton acceptor is K195. R259 is a binding site for NADPH. NADPH is bound by residues V283 and E285.

It belongs to the NAD-dependent glycerol-3-phosphate dehydrogenase family.

The protein resides in the cytoplasm. It carries out the reaction sn-glycerol 3-phosphate + NAD(+) = dihydroxyacetone phosphate + NADH + H(+). It catalyses the reaction sn-glycerol 3-phosphate + NADP(+) = dihydroxyacetone phosphate + NADPH + H(+). The protein operates within membrane lipid metabolism; glycerophospholipid metabolism. Catalyzes the reduction of the glycolytic intermediate dihydroxyacetone phosphate (DHAP) to sn-glycerol 3-phosphate (G3P), the key precursor for phospholipid synthesis. The chain is Glycerol-3-phosphate dehydrogenase [NAD(P)+] from Haemophilus influenzae (strain 86-028NP).